Reading from the N-terminus, the 724-residue chain is MLRAASSIRAVANRGLATAAVARPGVPLDEREGKEIYTTVGIDYNEPKFDKILIANRGEIACRVIKTARAMGIKTVAVHSDVDSNSLHVKMADEAVCVGEAPTAKSYLRADRILQAVEDTGAQAVHPGYGFLSENTKFAAELEKAGAKFIGPNSKAILDMGDKIHSKKIATAARVSMIPGYDGEIADEDMCVKVSRDIGYPVMIKASAGGGGKGMRVAWNDKQAREGYRLSKQEAASSFGDDRMLVEKFIDNPRHIEMQVLCDKHGNALWLNERECSIQRRNQKVIEEAPSSFVPPEMRRKMGEQAVQLAKAVGYDSAGTVEFLVDSQRNFYFLEMNTRLQVEHPITECITGIDIVQQMLRVSYGHPLPITQEQVPLNGWAFESRVYAEDPYKGFGLPSVGRLSRYVEPKHVDGVRCDSGIREGSEISIYYDPLICKLVTHGDNREQALNRMQEALDNYVIRGVTHNIPLLRDIVQEKRFRTGDITTKYLPEVYPEGFQGTSLSPKEQDVVIAFASALNARKLARANQFLNQNKQRSTHVASFSKTYKFVSSLPVKEGERPTEHAVEVEFVEGSANKAQVRIGGKTVTISGDLNLSHPVNSIEVDGEHITTQIVGKRAGEITVLYKGTPFKVKVLPEQAVKYLQYMKEKAKVDLSTVVLSPMPGAIKNVNVKPGDMVSEGQELVVMEAMKMQNSLHAGKTGRVKAVNVKVGATVDEGEVLVELE.

The Biotin carboxylation domain maps to 48 to 495 (KFDKILIANR…TTKYLPEVYP (448 aa)). ATP-binding positions include K163, 195–256 (SRDI…PRHI), E247, and N282. Residues 167–364 (KKIATAARVS…IVQQMLRVSY (198 aa)) enclose the ATP-grasp domain. 3 residues coordinate Mg(2+): E322, E335, and N337. Mn(2+)-binding residues include E322, E335, and N337. R339 is an active-site residue. Biotin is bound at residue F395. In terms of domain architecture, Biotinyl-binding spans 649 to 724 (KAKVDLSTVV…DEGEVLVELE (76 aa)). At K690 the chain carries N6-biotinyllysine.

The holoenzyme is a dodecamer composed of 6 alpha subunits and 6 beta subunits. Interacts with sir-2.2 and sir-2.3. Requires biotin as cofactor. The cofactor is Mg(2+). Mn(2+) is required as a cofactor. The biotin cofactor is covalently attached to the C-terminal biotinyl-binding domain and is required for the catalytic activity.

It is found in the mitochondrion matrix. The enzyme catalyses propanoyl-CoA + hydrogencarbonate + ATP = (S)-methylmalonyl-CoA + ADP + phosphate + H(+). It catalyses the reaction butanoyl-CoA + hydrogencarbonate + ATP = (2S)-ethylmalonyl-CoA + ADP + phosphate + H(+). It functions in the pathway metabolic intermediate metabolism; propanoyl-CoA degradation; succinyl-CoA from propanoyl-CoA: step 1/3. Its function is as follows. This is one of the 2 subunits of the biotin-dependent propionyl-CoA carboxylase (PCC), a mitochondrial enzyme involved in the catabolism of odd chain fatty acids, branched-chain amino acids isoleucine, threonine, methionine, and valine and other metabolites. Propionyl-CoA carboxylase catalyzes the carboxylation of propionyl-CoA/propanoyl-CoA to D-methylmalonyl-CoA/(S)-methylmalonyl-CoA. Within the holoenzyme, the alpha subunit catalyzes the ATP-dependent carboxylation of the biotin carried by the biotin carboxyl carrier (BCC) domain, while the beta subunit then transfers the carboxyl group from carboxylated biotin to propionyl-CoA. Propionyl-CoA carboxylase also significantly acts on butyryl-CoA/butanoyl-CoA, which is converted to ethylmalonyl-CoA/(2S)-ethylmalonyl-CoA. Other alternative minor substrates include (2E)-butenoyl-CoA/crotonoyl-CoA. The chain is Propionyl-CoA carboxylase alpha chain, mitochondrial (pcca-1) from Caenorhabditis elegans.